The primary structure comprises 134 residues: Probable glycine cleavage system H protein (134 aa).

Residues 29 to 110 (TVLVGISDYA…PYENWIAKLK (82 aa)) enclose the Lipoyl-binding domain. Residue Lys-70 is modified to N6-lipoyllysine.

It belongs to the GcvH family. The glycine cleavage system is composed of four proteins: P, T, L and H. (R)-lipoate is required as a cofactor.

Functionally, the glycine cleavage system catalyzes the degradation of glycine. The H protein shuttles the methylamine group of glycine from the P protein to the T protein. The polypeptide is Probable glycine cleavage system H protein (Thermococcus kodakarensis (strain ATCC BAA-918 / JCM 12380 / KOD1) (Pyrococcus kodakaraensis (strain KOD1))).